Consider the following 426-residue polypeptide: Diaminobutyrate--2-oxoglutarate transaminase (426 aa).

An N6-(pyridoxal phosphate)lysine modification is found at lysine 274.

Belongs to the class-III pyridoxal-phosphate-dependent aminotransferase family. Pyridoxal 5'-phosphate is required as a cofactor.

The enzyme catalyses L-2,4-diaminobutanoate + 2-oxoglutarate = L-aspartate 4-semialdehyde + L-glutamate. It participates in amine and polyamine biosynthesis; ectoine biosynthesis; L-ectoine from L-aspartate 4-semialdehyde: step 1/3. Functionally, catalyzes reversively the conversion of L-aspartate beta-semialdehyde (ASA) to L-2,4-diaminobutyrate (DABA) by transamination with L-glutamate. The polypeptide is Diaminobutyrate--2-oxoglutarate transaminase (ectB) (Oceanobacillus iheyensis (strain DSM 14371 / CIP 107618 / JCM 11309 / KCTC 3954 / HTE831)).